A 236-amino-acid chain; its full sequence is Small ribosomal subunit protein uS2c (236 aa).

Belongs to the universal ribosomal protein uS2 family.

Its subcellular location is the plastid. The protein localises to the chloroplast. In Oenothera biennis (German evening primrose), this protein is Small ribosomal subunit protein uS2c (rps2).